A 148-amino-acid chain; its full sequence is NPC intracellular cholesterol transporter 2 homolog a (148 aa).

The first 16 residues, 1–16 (MLRYAVIACAALVVFA), serve as a signal peptide directing secretion. 3 cysteine pairs are disulfide-bonded: Cys-24–Cys-140, Cys-39–Cys-46, and Cys-92–Cys-99. N-linked (GlcNAc...) asparagine glycosylation occurs at Asn-51.

This sequence belongs to the NPC2 family. As to expression, broadly expressed with a higher level of expression in many tissues, including midgut, salivary gland and ventral nerve cord.

The protein resides in the secreted. Functionally, functions redundantly with Npc2b in regulating sterol homeostasis and ecdysteroid biosynthesis, probably by controlling the availability of sterol substrate. The protein is NPC intracellular cholesterol transporter 2 homolog a of Drosophila melanogaster (Fruit fly).